The following is a 192-amino-acid chain: Large ribosomal subunit protein bL9 (192 aa).

Positions 172–192 (DALRPEDFFDPEADGVDEDEA) are disordered. The span at 179 to 192 (FFDPEADGVDEDEA) shows a compositional bias: acidic residues.

This sequence belongs to the bacterial ribosomal protein bL9 family.

Its function is as follows. Binds to the 23S rRNA. The polypeptide is Large ribosomal subunit protein bL9 (Rhizobium johnstonii (strain DSM 114642 / LMG 32736 / 3841) (Rhizobium leguminosarum bv. viciae)).